Here is a 388-residue protein sequence, read N- to C-terminus: Pyruvate dehydrogenase E1 component subunit alpha, testis-specific form, mitochondrial (388 aa).

The N-terminal 27 residues, 1–27 (MLAAFISRVLRRVAQKSARRVLVASRN), are a transit peptide targeting the mitochondrion. The pyruvate site is built by H90, Y116, R117, G163, V165, D194, G195, A196, N223, and Y225. Thiamine diphosphate is bound by residues Y116, R117, G163, V165, D194, G195, A196, and N223. D194 is a Mg(2+) binding site. 2 residues coordinate Mg(2+): N223 and Y225. A thiamine diphosphate-binding site is contributed by H290. S291 carries the phosphoserine; by PDK1, PDK2, PDK3 and PDK4 modification. S293 bears the Phosphoserine mark. S298 carries the post-translational modification Phosphoserine; by PDK3.

As to quaternary structure, heterotetramer of two PDHA2 and two PDHB subunits. The heterotetramer interacts with DLAT, and is part of the multimeric pyruvate dehydrogenase complex that contains multiple copies of pyruvate dehydrogenase (E1), dihydrolipoamide acetyltransferase (DLAT, E2) and lipoamide dehydrogenase (DLD, E3). These subunits are bound to an inner core composed of about 48 DLAT and 12 PDHX molecules. It depends on thiamine diphosphate as a cofactor. Mg(2+) serves as cofactor. Phosphorylation at Ser-291, Ser-293 and Ser-298 by PDK family kinases inactivates the enzyme; for this phosphorylation at a single site is sufficient. Phosphorylation at Ser-293 interferes with access to active site, and thereby inactivates the enzyme. Dephosphorylation at all three sites, i.e. at Ser-291, Ser-293 and Ser-298, is required for reactivation. Testis. Expressed in postmeiotic spermatogenic cells.

The protein resides in the mitochondrion matrix. The enzyme catalyses N(6)-[(R)-lipoyl]-L-lysyl-[protein] + pyruvate + H(+) = N(6)-[(R)-S(8)-acetyldihydrolipoyl]-L-lysyl-[protein] + CO2. Pyruvate dehydrogenase activity is inhibited by phosphorylation of PDHA2; it is reactivated by dephosphorylation. In terms of biological role, the pyruvate dehydrogenase complex catalyzes the overall conversion of pyruvate to acetyl-CoA and CO(2), and thereby links the glycolytic pathway to the tricarboxylic cycle. The sequence is that of Pyruvate dehydrogenase E1 component subunit alpha, testis-specific form, mitochondrial (PDHA2) from Homo sapiens (Human).